Consider the following 158-residue polypeptide: Protein Smg homolog (158 aa).

The protein belongs to the Smg family.

The polypeptide is Protein Smg homolog (Shewanella sp. (strain MR-4)).